The chain runs to 372 residues: NAD(P)H-quinone oxidoreductase subunit 1 (372 aa).

The next 8 membrane-spanning stretches (helical) occupy residues 27-47 (AIWM…GVLV), 97-117 (WLFT…FLIV), 128-148 (VGMG…GLLM), 166-186 (AAQS…IAMM), 204-224 (ILGW…IAAL), 249-269 (YSGM…ILSS), 308-328 (SLGI…AILL), and 351-371 (VGLV…FAFG).

It belongs to the complex I subunit 1 family. NDH-1 is composed of at least 11 different subunits.

It is found in the cellular thylakoid membrane. The enzyme catalyses a plastoquinone + NADH + (n+1) H(+)(in) = a plastoquinol + NAD(+) + n H(+)(out). The catalysed reaction is a plastoquinone + NADPH + (n+1) H(+)(in) = a plastoquinol + NADP(+) + n H(+)(out). In terms of biological role, NDH-1 shuttles electrons from an unknown electron donor, via FMN and iron-sulfur (Fe-S) centers, to quinones in the respiratory and/or the photosynthetic chain. The immediate electron acceptor for the enzyme in this species is believed to be plastoquinone. Couples the redox reaction to proton translocation, and thus conserves the redox energy in a proton gradient. The sequence is that of NAD(P)H-quinone oxidoreductase subunit 1 from Nostoc punctiforme (strain ATCC 29133 / PCC 73102).